Consider the following 63-residue polypeptide: Cytochrome c oxidase subunit 7C, mitochondrial (63 aa).

Residues 1-16 (MLGQSIRRFTTSVVRR) constitute a mitochondrion transit peptide. The Mitochondrial matrix segment spans residues 17–33 (SHYEEGPGKNLPFSVEN). N6-acetyllysine; alternate is present on Lys25. Lys25 carries the post-translational modification N6-succinyllysine; alternate. The chain crosses the membrane as a helical span at residues 34–60 (KWRLLAMMTLYFGSGFAAPFFIVRHQL). The Mitochondrial intermembrane segment spans residues 61–63 (LKK).

It belongs to the cytochrome c oxidase VIIc family. In terms of assembly, component of the cytochrome c oxidase (complex IV, CIV), a multisubunit enzyme composed of 14 subunits. The complex is composed of a catalytic core of 3 subunits MT-CO1, MT-CO2 and MT-CO3, encoded in the mitochondrial DNA, and 11 supernumerary subunits COX4I, COX5A, COX5B, COX6A, COX6B, COX6C, COX7A, COX7B, COX7C, COX8 and NDUFA4, which are encoded in the nuclear genome. The complex exists as a monomer or a dimer and forms supercomplexes (SCs) in the inner mitochondrial membrane with NADH-ubiquinone oxidoreductase (complex I, CI) and ubiquinol-cytochrome c oxidoreductase (cytochrome b-c1 complex, complex III, CIII), resulting in different assemblies (supercomplex SCI(1)III(2)IV(1) and megacomplex MCI(2)III(2)IV(2)). Interacts with RAB5IF.

The protein localises to the mitochondrion inner membrane. It functions in the pathway energy metabolism; oxidative phosphorylation. In terms of biological role, component of the cytochrome c oxidase, the last enzyme in the mitochondrial electron transport chain which drives oxidative phosphorylation. The respiratory chain contains 3 multisubunit complexes succinate dehydrogenase (complex II, CII), ubiquinol-cytochrome c oxidoreductase (cytochrome b-c1 complex, complex III, CIII) and cytochrome c oxidase (complex IV, CIV), that cooperate to transfer electrons derived from NADH and succinate to molecular oxygen, creating an electrochemical gradient over the inner membrane that drives transmembrane transport and the ATP synthase. Cytochrome c oxidase is the component of the respiratory chain that catalyzes the reduction of oxygen to water. Electrons originating from reduced cytochrome c in the intermembrane space (IMS) are transferred via the dinuclear copper A center (CU(A)) of subunit 2 and heme A of subunit 1 to the active site in subunit 1, a binuclear center (BNC) formed by heme A3 and copper B (CU(B)). The BNC reduces molecular oxygen to 2 water molecules using 4 electrons from cytochrome c in the IMS and 4 protons from the mitochondrial matrix. This Sus scrofa (Pig) protein is Cytochrome c oxidase subunit 7C, mitochondrial (COX7C).